The following is an 85-amino-acid chain: Antitoxin VapB43 (85 aa).

A disordered region spans residues 37–60 (GLNPPKPQAAGRYRVQPSGKGGLR).

Functionally, antitoxin component of a type II toxin-antitoxin (TA) system. This chain is Antitoxin VapB43 (vapB43), found in Mycobacterium tuberculosis (strain CDC 1551 / Oshkosh).